We begin with the raw amino-acid sequence, 155 residues long: Small ribosomal subunit protein uS7c (155 aa).

The protein belongs to the universal ribosomal protein uS7 family. As to quaternary structure, part of the 30S ribosomal subunit.

Its subcellular location is the plastid. The protein localises to the chloroplast. Functionally, one of the primary rRNA binding proteins, it binds directly to 16S rRNA where it nucleates assembly of the head domain of the 30S subunit. The sequence is that of Small ribosomal subunit protein uS7c (rps7) from Cedrus deodara (Deodar cedar).